Reading from the N-terminus, the 339-residue chain is Phosphate acyltransferase (339 aa).

Belongs to the PlsX family. As to quaternary structure, homodimer. Probably interacts with PlsY.

Its subcellular location is the cytoplasm. It carries out the reaction a fatty acyl-[ACP] + phosphate = an acyl phosphate + holo-[ACP]. Its pathway is lipid metabolism; phospholipid metabolism. Functionally, catalyzes the reversible formation of acyl-phosphate (acyl-PO(4)) from acyl-[acyl-carrier-protein] (acyl-ACP). This enzyme utilizes acyl-ACP as fatty acyl donor, but not acyl-CoA. The protein is Phosphate acyltransferase of Clostridium perfringens (strain ATCC 13124 / DSM 756 / JCM 1290 / NCIMB 6125 / NCTC 8237 / Type A).